Here is a 306-residue protein sequence, read N- to C-terminus: Pantothenate kinase (306 aa).

91–98 (GSVAVGKS) provides a ligand contact to ATP.

The protein belongs to the prokaryotic pantothenate kinase family.

The protein resides in the cytoplasm. It catalyses the reaction (R)-pantothenate + ATP = (R)-4'-phosphopantothenate + ADP + H(+). The protein operates within cofactor biosynthesis; coenzyme A biosynthesis; CoA from (R)-pantothenate: step 1/5. This chain is Pantothenate kinase, found in Streptococcus pneumoniae serotype 2 (strain D39 / NCTC 7466).